The following is a 655-amino-acid chain: MQRGKISFGKIKLNVNVPPAEPRSNETEAEDAKESTEASGNGGGFKKMDKEQMIRQIEDVAEDLESQHLKEVMGISGFGRKAAKVFDINEQIEKARVTRPGMDKKREESKPKEDDQKDEEEEDVIGPLPPAVTTDKEKATKESSKDEDSDDDDYSSDEDSDDEQSLAKRIPYTHEVQMQHGSRAVLALAGDPSGARLVSGSIDYDMCFWDFAGMDSSMRSFRQLQPCENHPIRSLQYSVTGDMILVISGNAQAKVLDRDGFEKLECCKGDQYISDMSRTKGHVAQLTSGCWHPFNREQFLTAALDGTLRIWQGLKSKEQLQVIKTRAQGGLRTNAASCNFNRDATLIAAGCVDGSIQTWDTRKMFVNTTHCVRDAHQKGSEITSIVFSYMGQQLATRSNDETMKLWDLRQFKQPLHTWTNLFSRYDTTDCCFSPDDRLLVTGESLPKGQAEANLYFYSTKSYEEVQRIPVSNAHVVKTLWHPKLNQLFVSCGNGTIKCYYDEHRSIRGAKLCVVKTHRKRQPMEMVGVSQIITPHALPLFRQEKSRTSRKRMEKARMDPVKSQRPDLPITSGQGGRVASSGGTLSSYVIRNLGLSKRVDDDQDPREAILKYAKDAAENPYWIAPAYKQTQPKAIFSEKLPADEPATKKPKTEADK.

Disordered regions lie at residues 1–54 (MQRG…EQMI) and 83–165 (AKVF…DEQS). Basic and acidic residues-rich tracts occupy residues 23–36 (RSNE…KEST), 91–115 (QIEK…KEDD), and 134–146 (TDKE…SSKD). The segment covering 147–164 (EDSDDDDYSSDEDSDDEQ) has biased composition (acidic residues). WD repeat units lie at residues 180–219 (HGSR…SSMR), 227–268 (CENH…ECCK), 281–321 (GHVA…EQLQ), 330–369 (GLRT…VNTT), 377–416 (QKGS…QPLH), 422–467 (FSRY…EVQR), and 470–510 (VSNA…RGAK). Disordered regions lie at residues 544-580 (KSRT…VASS) and 633-655 (AIFS…EADK). 2 stretches are compositionally biased toward basic and acidic residues: residues 554 to 564 (KARMDPVKSQR) and 639 to 655 (LPAD…EADK).

Belongs to the WD repeat GAD-1 family.

The protein is Gastrulation defective protein 1 homolog of Drosophila melanogaster (Fruit fly).